The chain runs to 414 residues: TnpB-like protein MJ1635 (414 aa).

The Zn(2+) site is built by Cys329, Cys332, Cys346, and Cys349.

This sequence in the N-terminal section; belongs to the transposase 2 family. In the C-terminal section; belongs to the transposase 35 family.

The polypeptide is TnpB-like protein MJ1635 (Methanocaldococcus jannaschii (strain ATCC 43067 / DSM 2661 / JAL-1 / JCM 10045 / NBRC 100440) (Methanococcus jannaschii)).